Here is a 192-residue protein sequence, read N- to C-terminus: Adenylate kinase (192 aa).

10–18 (GVPGVGGTT) is an ATP binding site.

Belongs to the archaeal adenylate kinase family. As to quaternary structure, monomer.

It is found in the cytoplasm. The catalysed reaction is AMP + ATP = 2 ADP. The chain is Adenylate kinase from Methanococcus maripaludis (strain C5 / ATCC BAA-1333).